The following is a 149-amino-acid chain: Large ribosomal subunit protein bL9 (149 aa).

This sequence belongs to the bacterial ribosomal protein bL9 family.

Functionally, binds to the 23S rRNA. This Geobacillus stearothermophilus (Bacillus stearothermophilus) protein is Large ribosomal subunit protein bL9 (rplI).